A 209-amino-acid polypeptide reads, in one-letter code: Pyridoxal 5'-phosphate synthase subunit PdxT (209 aa).

58-60 provides a ligand contact to L-glutamine; sequence GES. The active-site Nucleophile is Cys-90. L-glutamine is bound by residues Arg-119 and 148–149; that span reads IR. Active-site charge relay system residues include His-185 and Glu-187.

It belongs to the glutaminase PdxT/SNO family. In terms of assembly, in the presence of PdxS, forms a dodecamer of heterodimers. Only shows activity in the heterodimer.

It carries out the reaction aldehydo-D-ribose 5-phosphate + D-glyceraldehyde 3-phosphate + L-glutamine = pyridoxal 5'-phosphate + L-glutamate + phosphate + 3 H2O + H(+). It catalyses the reaction L-glutamine + H2O = L-glutamate + NH4(+). It functions in the pathway cofactor biosynthesis; pyridoxal 5'-phosphate biosynthesis. Catalyzes the hydrolysis of glutamine to glutamate and ammonia as part of the biosynthesis of pyridoxal 5'-phosphate. The resulting ammonia molecule is channeled to the active site of PdxS. The protein is Pyridoxal 5'-phosphate synthase subunit PdxT of Clavibacter michiganensis subsp. michiganensis (strain NCPPB 382).